Reading from the N-terminus, the 322-residue chain is Ribose 1,5-bisphosphate isomerase (322 aa).

Substrate-binding positions include 20-23 and arginine 63; that span reads RGAG. Cysteine 133 functions as the Proton acceptor in the catalytic mechanism. 135–137 serves as a coordination point for substrate; that stretch reads SKA. The active-site Proton donor is the aspartate 202. Substrate contacts are provided by residues 212–213 and lysine 238; that span reads NK.

Belongs to the eIF-2B alpha/beta/delta subunits family. R15P isomerase subfamily. As to quaternary structure, homohexamer; trimer of dimers.

It catalyses the reaction alpha-D-ribose 1,5-bisphosphate = D-ribulose 1,5-bisphosphate. Is highly activated in the presence of AMP, with an increase of &gt;40-fold in activity levels. Among other nucleotides, isomerase activity is slightly increased in the presence of GMP, but CMP, UMP, TMP, and NAD(+) have no effect; therefore, AMP is likely the major activator of R15P isomerase in vivo. To a lesser extent, various compounds with an adenosyl moiety, such as dAMP, adenosine, or methylthioadenosine, can also act as activators. The regulation of this enzyme by AMP prevents excess degradation of intracellular AMP by the archaeal AMP degradation pathway. In terms of biological role, catalyzes the isomerization of ribose 1,5-bisphosphate (R15P) to ribulose 1,5-bisphosphate (RuBP), the CO(2) acceptor and substrate for RubisCO. Only accepts the alpha-anomer of D-ribose 1,5-bisphosphate as substrate, being inactive on the beta-anomer. Displays a strict substrate specificity, since other phosphorylated sugars such as R5P, ribose, G16P, G6P, G1P, FBP, F6P, and PRPP, are not substrates. Functions in an archaeal AMP degradation pathway, together with AMP phosphorylase and RubisCO. In Thermococcus kodakarensis (strain ATCC BAA-918 / JCM 12380 / KOD1) (Pyrococcus kodakaraensis (strain KOD1)), this protein is Ribose 1,5-bisphosphate isomerase.